The chain runs to 287 residues: Probable endoribonuclease YicC (287 aa).

Belongs to the YicC/YloC family. A divalent metal cation serves as cofactor.

Its function is as follows. Probably a ssRNA endonuclease. Functionally, might contribute to small RNA (sRNA) regulation. The protein is Probable endoribonuclease YicC of Salmonella typhimurium (strain LT2 / SGSC1412 / ATCC 700720).